A 232-amino-acid chain; its full sequence is Large ribosomal subunit protein uL1 (232 aa).

Belongs to the universal ribosomal protein uL1 family. Part of the 50S ribosomal subunit.

Its function is as follows. Binds directly to 23S rRNA. The L1 stalk is quite mobile in the ribosome, and is involved in E site tRNA release. Functionally, protein L1 is also a translational repressor protein, it controls the translation of the L11 operon by binding to its mRNA. The chain is Large ribosomal subunit protein uL1 from Bacillus cereus (strain ATCC 14579 / DSM 31 / CCUG 7414 / JCM 2152 / NBRC 15305 / NCIMB 9373 / NCTC 2599 / NRRL B-3711).